Here is a 552-residue protein sequence, read N- to C-terminus: Pyrophosphate--fructose 6-phosphate 1-phosphotransferase subunit beta (552 aa).

G90 provides a ligand contact to diphosphate. D184 lines the Mg(2+) pocket. Residues 212–214, 251–252, 259–261, E320, and 425–428 contribute to the substrate site; these read TID, KY, MGR, and YEGR. The Proton acceptor role is filled by D214.

This sequence belongs to the phosphofructokinase type A (PFKA) family. PPi-dependent PFK group II subfamily. Clade 'Long' sub-subfamily. As to quaternary structure, tetramer of two alpha (regulatory) and two beta (catalytic) chains. The cofactor is Mg(2+).

It localises to the cytoplasm. The enzyme catalyses beta-D-fructose 6-phosphate + diphosphate = beta-D-fructose 1,6-bisphosphate + phosphate + H(+). It functions in the pathway carbohydrate degradation; glycolysis; D-glyceraldehyde 3-phosphate and glycerone phosphate from D-glucose: step 3/4. Allosterically activated by fructose 2,6-bisphosphate. Functionally, catalytic subunit of pyrophosphate--fructose 6-phosphate 1-phosphotransferase. Catalyzes the phosphorylation of D-fructose 6-phosphate, the first committing step of glycolysis. Uses inorganic phosphate (PPi) as phosphoryl donor instead of ATP like common ATP-dependent phosphofructokinases (ATP-PFKs), which renders the reaction reversible, and can thus function both in glycolysis and gluconeogenesis. This is Pyrophosphate--fructose 6-phosphate 1-phosphotransferase subunit beta from Ricinus communis (Castor bean).